A 539-amino-acid chain; its full sequence is Cytochrome c oxidase subunit 1 homolog (539 aa).

Helical transmembrane passes span 28-48 (LFAA…LLLL) and 75-95 (GVMA…VVAL). His-117 serves as a coordination point for heme b. 11 consecutive transmembrane segments (helical) span residues 118-138 (TSAV…FYVV), 154-174 (FVFW…LLGI), 187-207 (VDLW…GTIL), 214-234 (ISVA…LHIV), 265-285 (GHNA…YYFI), 298-318 (LSII…PHHL), 330-350 (LGMV…INGL), 368-388 (MMVM…MMSI), 402-422 (IGHV…GAIY), 443-463 (HFWL…VAGI), and 498-518 (LGGL…TMTI). The Cu cation site is built by His-266, His-316, and His-317. Residues His-404 and His-406 each coordinate heme b.

The protein belongs to the heme-copper respiratory oxidase family. Requires Cu(2+) as cofactor. Heme b is required as a cofactor.

It is found in the cell membrane. The catalysed reaction is 4 Fe(II)-[cytochrome c] + O2 + 8 H(+)(in) = 4 Fe(III)-[cytochrome c] + 2 H2O + 4 H(+)(out). The protein operates within energy metabolism; oxidative phosphorylation. Functionally, cytochrome c oxidase is the component of the respiratory chain that catalyzes the reduction of oxygen to water. Subunits 1-3 form the functional core of the enzyme complex. Co I is the catalytic subunit of the enzyme. Electrons originating in cytochrome c or a quinol are transferred to the bimetallic center formed by a high-spin heme and copper B. The protein is Cytochrome c oxidase subunit 1 homolog (fixN) of Agrobacterium tumefaciens (strain T37).